The primary structure comprises 271 residues: Putative phosphoenolpyruvate synthase regulatory protein (271 aa).

ADP is bound at residue 151–158 (GVSRSGKT).

This sequence belongs to the pyruvate, phosphate/water dikinase regulatory protein family. PSRP subfamily.

The catalysed reaction is [pyruvate, water dikinase] + ADP = [pyruvate, water dikinase]-phosphate + AMP + H(+). It catalyses the reaction [pyruvate, water dikinase]-phosphate + phosphate + H(+) = [pyruvate, water dikinase] + diphosphate. Bifunctional serine/threonine kinase and phosphorylase involved in the regulation of the phosphoenolpyruvate synthase (PEPS) by catalyzing its phosphorylation/dephosphorylation. In Burkholderia multivorans (strain ATCC 17616 / 249), this protein is Putative phosphoenolpyruvate synthase regulatory protein.